The chain runs to 138 residues: Basic phospholipase A2 Sct-N6 (138 aa).

A signal peptide spans 1 to 16; sequence MRTFWIVAVLLVGVEG. Disulfide bonds link cysteine 42-cysteine 131, cysteine 44-cysteine 60, cysteine 59-cysteine 111, cysteine 65-cysteine 138, cysteine 66-cysteine 104, cysteine 73-cysteine 97, and cysteine 91-cysteine 102. Residues tyrosine 43, glycine 45, and glycine 47 each coordinate Ca(2+). The active site involves histidine 63. Residue aspartate 64 coordinates Ca(2+). Aspartate 105 is an active-site residue.

This sequence belongs to the phospholipase A2 family. Group II subfamily. D49 sub-subfamily. Requires Ca(2+) as cofactor. As to expression, expressed by the venom gland.

Its subcellular location is the secreted. It carries out the reaction a 1,2-diacyl-sn-glycero-3-phosphocholine + H2O = a 1-acyl-sn-glycero-3-phosphocholine + a fatty acid + H(+). In terms of biological role, snake venom phospholipase A2 (PLA2) that displays edema-inducing activities, as well as presynaptic neurotoxicity and low myotoxicity. PLA2 catalyzes the calcium-dependent hydrolysis of the 2-acyl groups in 3-sn-phosphoglycerides. The protein is Basic phospholipase A2 Sct-N6 of Sistrurus tergeminus (Western massasauga).